The primary structure comprises 788 residues: Leucine-rich repeat and fibronectin type-III domain-containing protein 2 (788 aa).

The N-terminal stretch at 1–20 (METLLGGLLAFGMAFAVVDA) is a signal peptide. One can recognise an LRRNT domain in the interval 21–52 (CPKYCVCQNLSESLGTLCPSKGLLFVPPDIDR). Residues 21 to 534 (CPKYCVCQNL…MHSQILGGTM (514 aa)) are Extracellular-facing. N-linked (GlcNAc...) asparagine glycosylation is found at asparagine 29 and asparagine 74. LRR repeat units lie at residues 53-74 (RTVELRLGGNFIIHIGRQDFAN), 77-98 (GLVDLTLSRNTISHIQPFSFLD), 101-122 (SLRSLHLDSNRLPSLGEDTLRG), 125-146 (NLQHLIVNNNQLGGIADDAFED), 150-171 (TLEDLDLSYNNLHGLPWDSVRR), 174-195 (NLHQLSLDHNLLDHIAEGTFAD), and 198-219 (KLARLDLTSNRLQKLPPDPIFA). In terms of domain architecture, LRRCT spans 242–288 (NPLHCNCELLWLRRLERDDDLKTCGSPGGLKGRYFWHIREEEFVCEP). In terms of domain architecture, Ig-like spans 289 to 375 (PLITQHTHKL…GEATATVEVS (87 aa)). Cysteine 310 and cysteine 359 are disulfide-bonded. N-linked (GlcNAc...) asparagine glycosylation is found at asparagine 332, asparagine 341, asparagine 384, and asparagine 457. The tract at residues 383 to 423 (SNSTSRMAPPKSRLSDITGSSKTSRGGGGSGAGEPPKSTPE) is disordered. The Fibronectin type-III domain maps to 422–518 (PERAVLVSDV…GCAQFFTKAD (97 aa)). The helical transmembrane segment at 535-555 (ILVIGGIIVATLLVFIVILMV) threads the bilayer. Residues 556-788 (RYKVCNHDAP…SSEWVMESTV (233 aa)) lie on the Cytoplasmic side of the membrane. Residues 620-641 (CDSSSSSSLGSGEAAGLSRGPW) are compositionally biased toward low complexity. Disordered regions lie at residues 620-655 (CDSSSSSSLGSGEAAGLSRGPWRLPPPAPRPKPSLD) and 668-707 (SQRKEELLDSRTPAGRGAGTSARGHHSDREPLLGPPATRA). A compositionally biased stretch (pro residues) spans 642-651 (RLPPPAPRPK). Positions 785–788 (ESTV) match the PDZ-binding motif.

Belongs to the LRFN family. In terms of assembly, forms heteromeric complexes with LRFN1, LRFN3 and LRFN4. Can form homomeric complexes, but not across cell junctions. Can form heteromeric complexes with LRFN5. Interacts with DLG1, DLG3 and DLG4; interaction with DLG4 is mediated by the PDZ-binding domain. Also interacts with DLG2. Interacts with 2 NMDA receptor subunits GRIN1 and GRIN2A.

The protein resides in the membrane. The protein localises to the synapse. It is found in the postsynaptic cell membrane. Functionally, promotes neurite outgrowth in hippocampal neurons. Enhances the cell surface expression of GRIN1 and GRIN2A NMDA receptor subunits. May play a role in redistributing DLG4 to the cell periphery. This chain is Leucine-rich repeat and fibronectin type-III domain-containing protein 2 (Lrfn2), found in Rattus norvegicus (Rat).